We begin with the raw amino-acid sequence, 266 residues long: Probable sulfate transport system permease protein cysT (266 aa).

The next 7 membrane-spanning stretches (helical) occupy residues 12-32 (ILLF…FLLI), 59-79 (MAFY…WVLT), 91-111 (AAVD…LATV), 129-149 (IVFT…PFVI), 181-201 (VILP…FSRA), 206-226 (GSIV…SVLI), and 236-256 (LGAS…LLLI). The region spanning 53–257 (YLLTVQMAFY…IALFTLLLIN (205 aa)) is the ABC transmembrane type-1 domain.

This sequence belongs to the binding-protein-dependent transport system permease family. CysTW subfamily.

The protein localises to the plastid. Its subcellular location is the chloroplast membrane. Functionally, part of the ABC transporter complex cysAWTP (TC 3.A.1.6.1) involved in sulfate/thiosulfate import. Probably responsible for the translocation of the substrate across the membrane. This Chlorella vulgaris (Green alga) protein is Probable sulfate transport system permease protein cysT (cysT).